Reading from the N-terminus, the 118-residue chain is Large ribosomal subunit protein bL19 (118 aa).

The protein belongs to the bacterial ribosomal protein bL19 family.

Its function is as follows. This protein is located at the 30S-50S ribosomal subunit interface and may play a role in the structure and function of the aminoacyl-tRNA binding site. This Geotalea uraniireducens (strain Rf4) (Geobacter uraniireducens) protein is Large ribosomal subunit protein bL19.